The primary structure comprises 623 residues: F-box protein FBX14 (623 aa).

The tract at residues 18–48 (LNLNPPCSSSSSSSSAATFTNKSRNFKSSPP) is disordered. The segment covering 33-45 (AATFTNKSRNFKS) has biased composition (polar residues). The 44-residue stretch at 54 to 97 (VLENVLENVLQFLTSRCDRNAVSLVCRSWYRVEAQTRLEVFIGN) folds into the F-box domain. A 1D-myo-inositol hexakisphosphate-binding site is contributed by lysine 119. The segment at 126–127 (DF) is interaction with auxin-responsive proteins. 1D-myo-inositol hexakisphosphate-binding positions include 158 to 159 (KR) and arginine 391. Residues 394 to 399 (PFDPRE) are interaction with auxin-responsive proteins. Residue 447-449 (VFR) participates in 1D-myo-inositol hexakisphosphate binding. Positions 451–455 (CIMGR) are interaction with auxin-responsive proteins. 1D-myo-inositol hexakisphosphate is bound at residue arginine 482. The interaction with auxin-responsive proteins stretch occupies residues 510 to 511 (AF). 1D-myo-inositol hexakisphosphate contacts are provided by residues 530-531 (QK) and arginine 555.

As to quaternary structure, part of a SCF (SKP1-cullin-F-box) protein ligase complex. May interact with auxin and auxin-responsive proteins.

It localises to the nucleus. Its pathway is protein modification; protein ubiquitination. The sequence is that of F-box protein FBX14 (FBX14) from Arabidopsis thaliana (Mouse-ear cress).